The primary structure comprises 424 residues: MGYNIPRGTQDILPGESDRWQFVEQIMRDTCRTYQYKEIRTPIFEHTELFARGVGESTDIVQKEMYTFEDRKGRSLTLRPEGTAAAVRAFNENKLFANPVQPTKLYYVGPMFRYERPQTGRYRQFYQFGIEAIGSKDPAIDAEVMALAMSIYEKAGLENVKLVINSLGDQDSRKSYREALVKHFEPRIEEFCSDCQSRLHTNPLRILDCKKDRDHELMKSAPSILTYLNEESAAYFEKVKQYLNDLGISYEIDPNLVRGLDYYNHTAFEIMSNAEGFGAITTLAGGGRYDGLVEQIGGPEAPGIGFAMSIERLLAAIDAEKRELPVDKGIDCYIVTLGEKAKDYSVSLVYKLREAGISSEIDYENKKMKGQFKTADRLKARFIAILGEDELAQNKINVKDAQTGEQIEVALDEFIHVMKANQKG.

Belongs to the class-II aminoacyl-tRNA synthetase family. Homodimer.

Its subcellular location is the cytoplasm. The enzyme catalyses tRNA(His) + L-histidine + ATP = L-histidyl-tRNA(His) + AMP + diphosphate + H(+). The protein is Histidine--tRNA ligase (hisS) of Bacillus subtilis (strain 168).